The following is a 200-amino-acid chain: Small ribosomal subunit protein uS4 (200 aa).

Positions 22-42 (TGKELEKRPYAPGPHGPNQRK) are disordered. An S4 RNA-binding domain is found at 92–152 (ARLDNLVYRM…EKSRNLAVIK (61 aa)).

Belongs to the universal ribosomal protein uS4 family. In terms of assembly, part of the 30S ribosomal subunit. Contacts protein S5. The interaction surface between S4 and S5 is involved in control of translational fidelity.

Its function is as follows. One of the primary rRNA binding proteins, it binds directly to 16S rRNA where it nucleates assembly of the body of the 30S subunit. In terms of biological role, with S5 and S12 plays an important role in translational accuracy. This is Small ribosomal subunit protein uS4 from Bacillus cytotoxicus (strain DSM 22905 / CIP 110041 / 391-98 / NVH 391-98).